Consider the following 138-residue polypeptide: ATP synthase epsilon chain (138 aa).

It belongs to the ATPase epsilon chain family. As to quaternary structure, F-type ATPases have 2 components, CF(1) - the catalytic core - and CF(0) - the membrane proton channel. CF(1) has five subunits: alpha(3), beta(3), gamma(1), delta(1), epsilon(1). CF(0) has three main subunits: a, b and c.

It localises to the cell inner membrane. Its function is as follows. Produces ATP from ADP in the presence of a proton gradient across the membrane. This chain is ATP synthase epsilon chain, found in Geobacter metallireducens (strain ATCC 53774 / DSM 7210 / GS-15).